The following is a 163-amino-acid chain: Putative 4-hydroxy-4-methyl-2-oxoglutarate aldolase (163 aa).

Residues 76–79 and arginine 98 contribute to the substrate site; that span reads GDML. Aspartate 99 is an a divalent metal cation binding site.

Belongs to the class II aldolase/RraA-like family. As to quaternary structure, homotrimer. It depends on a divalent metal cation as a cofactor.

The enzyme catalyses 4-hydroxy-4-methyl-2-oxoglutarate = 2 pyruvate. It catalyses the reaction oxaloacetate + H(+) = pyruvate + CO2. In terms of biological role, catalyzes the aldol cleavage of 4-hydroxy-4-methyl-2-oxoglutarate (HMG) into 2 molecules of pyruvate. Also contains a secondary oxaloacetate (OAA) decarboxylase activity due to the common pyruvate enolate transition state formed following C-C bond cleavage in the retro-aldol and decarboxylation reactions. The chain is Putative 4-hydroxy-4-methyl-2-oxoglutarate aldolase from Pseudomonas putida (strain W619).